We begin with the raw amino-acid sequence, 368 residues long: 3-isopropylmalate dehydrogenase (368 aa).

79 to 91 (GPEWGTSSTVRPE) is an NAD(+) binding site. Positions 98, 108, 137, and 226 each coordinate substrate. Positions 226, 251, and 255 each coordinate Mg(2+). Position 291–303 (291–303 (GSAPDISGKGIVN)) interacts with NAD(+).

The protein belongs to the isocitrate and isopropylmalate dehydrogenases family. In terms of assembly, homodimer. The cofactor is Mg(2+). Requires Mn(2+) as cofactor.

The protein resides in the cytoplasm. The catalysed reaction is (2R,3S)-3-isopropylmalate + NAD(+) = 4-methyl-2-oxopentanoate + CO2 + NADH. It functions in the pathway amino-acid biosynthesis; L-leucine biosynthesis; L-leucine from 3-methyl-2-oxobutanoate: step 3/4. Its function is as follows. Catalyzes the oxidation of 3-carboxy-2-hydroxy-4-methylpentanoate (3-isopropylmalate) to 3-carboxy-4-methyl-2-oxopentanoate. The product decarboxylates to 4-methyl-2 oxopentanoate. The polypeptide is 3-isopropylmalate dehydrogenase (LEU1) (Sordaria macrospora).